The sequence spans 156 residues: MNPQRRRRLWWVLALLLAGGLATTLVSMALQRNVAYLYTPSEVLRGDAGENSRFRLGGMVEKGSFQRASGALEAHFRVTDGDAQLPVSYDRILPDLFREGQAVVATGRMQSGVFVAEDVLAKHDETYMPKEVADKMGSAHRKHDVPAAANQGGALR.

The Cytoplasmic segment spans residues 1–8; it reads MNPQRRRR. The chain crosses the membrane as a helical; Signal-anchor for type II membrane protein span at residues 9 to 29; that stretch reads LWWVLALLLAGGLATTLVSMA. At 30-156 the chain is on the periplasmic side; sequence LQRNVAYLYT…AAANQGGALR (127 aa). Residues H123 and Y127 each coordinate heme. The interval 135–156 is disordered; that stretch reads KMGSAHRKHDVPAAANQGGALR.

Belongs to the CcmE/CycJ family.

The protein localises to the cell inner membrane. In terms of biological role, heme chaperone required for the biogenesis of c-type cytochromes. Transiently binds heme delivered by CcmC and transfers the heme to apo-cytochromes in a process facilitated by CcmF and CcmH. This is Cytochrome c-type biogenesis protein CcmE 2 from Xanthomonas oryzae pv. oryzae (strain MAFF 311018).